Reading from the N-terminus, the 101-residue chain is Integration host factor subunit beta (101 aa).

It belongs to the bacterial histone-like protein family. Heterodimer of an alpha and a beta chain.

This protein is one of the two subunits of integration host factor, a specific DNA-binding protein that functions in genetic recombination as well as in transcriptional and translational control. This is Integration host factor subunit beta from Rhodopseudomonas palustris (strain BisB5).